A 629-amino-acid chain; its full sequence is mRNA cleavage and polyadenylation factor CLP1 (629 aa).

ATP-binding residues include Glu-21 and Lys-72. The interval 142 to 166 is disordered; it reads YIAPRTTDPNTETESDPSGTAAATV. Polar residues predominate over residues 148–159; that stretch reads TDPNTETESDPS. An ATP-binding site is contributed by 183–188; that stretch reads SAGKTS. Positions 562-582 are disordered; sequence PPRGGGGAGQPDSSTNPTDDE.

This sequence belongs to the Clp1 family. Clp1 subfamily. Component of a pre-mRNA cleavage factor complex. Interacts directly with PCF11.

It localises to the nucleus. Its function is as follows. Required for endonucleolytic cleavage during polyadenylation-dependent pre-mRNA 3'-end formation. In Mycosarcoma maydis (Corn smut fungus), this protein is mRNA cleavage and polyadenylation factor CLP1.